The chain runs to 347 residues: Circulating cathodic antigen (347 aa).

Positions 76–109 (ICLAAENKQLEQLKIENKTLRNSLDEHQTALDMI) form a coiled coil. Residues 149–177 (PGPKSVNTPSTNSIDSQSVSQKSNSGKVD) form a disordered region. Residues 153 to 174 (SVNTPSTNSIDSQSVSQKSNSG) are compositionally biased toward polar residues. Positions 206–233 (DAYATELEEELHRLRSENAGLREILMIS) form a coiled coil. The segment at 303 to 332 (LYNIPNPSDDSSNSGTISGNHSDEDSDEDD) is disordered. Residues 307–316 (PNPSDDSSNS) are compositionally biased toward low complexity.

This sequence belongs to the SIKE family. In terms of processing, O-glycosylated.

Functionally, involved in protection of the schistosome gut. This chain is Circulating cathodic antigen, found in Schistosoma mansoni (Blood fluke).